The primary structure comprises 619 residues: Auxin efflux carrier component 7 (619 aa).

The Extracellular portion of the chain corresponds to 1–7 (MITWHDL). Residues 8 to 28 (YTVLTAVIPLYVAMILAYGSV) traverse the membrane as a helical segment. Residues 29 to 38 (RWWKIFSPDQ) are Cytoplasmic-facing. The helical transmembrane segment at 39–59 (CSGINRFVAIFAVPLLSFHFI) threads the bilayer. (indol-3-yl)acetate is bound at residue Val51. Topologically, residues 60-71 (SSNNPYAMNLRF) are extracellular. The chain crosses the membrane as a helical span at residues 72-92 (IAADTLQKLIMLTLLIIWANF). Over 93–101 (TRSGSLEWS) the chain is Cytoplasmic. Residues 102–122 (ITIFSLSTLPNTLVMGIPLLI) form a helical membrane-spanning segment. Positions 112 and 114 each coordinate (indol-3-yl)acetate. At 123-131 (AMYGEYSGS) the chain is on the extracellular side. The chain crosses the membrane as a helical span at residues 132–152 (LMVQIVVLQCIIWYTLLLFLF). Tyr145 is a binding site for (indol-3-yl)acetate. Over 153-479 (EYRGAKILIM…LIRNPNTYSS (327 aa)) the chain is Cytoplasmic. Residues Ser229, Ser246, and Ser286 each carry the phosphoserine modification. Residues 306–340 (GAPGSYPAPNPEFSTGNKTGSKAPKENHHHVGKSN) form a disordered region. At Thr320 the chain carries Phosphothreonine. Ser357 is modified (phosphoserine). The interval 393 to 413 (HTQNGENKAGPMNGDYGGEEE) is disordered. The chain crosses the membrane as a helical span at residues 480–500 (LIGLIWALVAFRWDVAMPKII). At 501-503 (QQS) the chain is on the extracellular side. Residues 504-524 (ISILSDAGLGMAMFSLGLFMA) form a helical membrane-spanning segment. Over 525-538 (LQPKLIACGNSTAT) the chain is Cytoplasmic. Residues 539-559 (FAMAVRFFTGPAVMAVAAMAI) traverse the membrane as a helical segment. Over 560–564 (GLRGD) the chain is Extracellular. Residues 565–585 (LLRVAIVQAALPQGIVPFVFA) form a helical membrane-spanning segment. (indol-3-yl)acetate is bound by residues Ile579 and Val580. Over 586 to 598 (KEYNVHPAILSTG) the chain is Cytoplasmic. A helical transmembrane segment spans residues 599-619 (VIFGMLIALPITLVYYILLGL).

It belongs to the auxin efflux carrier (TC 2.A.69.1) family. In terms of assembly, homodimer.

It is found in the cell membrane. Functionally, acts as a component of the auxin efflux carrier. Mediates the initial auxin gradient which contributes to the establishment of the apical-basal axis in early embryogenesis. Together with PIN3 and PIN4, involved in the connective auxin transport (CAT) that ensures communication across the shoot system, and modulates strigolactone-mediated shoot branching control. The abcb19 pin3 pin4 pin7 quadruple mutant exhibits an additive phenotype on strigolactone-mediated bud outgrowth responses and shoot branching control. The polypeptide is Auxin efflux carrier component 7 (Arabidopsis thaliana (Mouse-ear cress)).